A 285-amino-acid chain; its full sequence is Probable endonuclease 4 (285 aa).

Zn(2+) is bound by residues His-69, His-109, Glu-145, Asp-179, His-182, His-216, Asp-229, His-231, and Glu-261.

The protein belongs to the AP endonuclease 2 family. Zn(2+) serves as cofactor.

It catalyses the reaction Endonucleolytic cleavage to 5'-phosphooligonucleotide end-products.. Endonuclease IV plays a role in DNA repair. It cleaves phosphodiester bonds at apurinic or apyrimidinic (AP) sites, generating a 3'-hydroxyl group and a 5'-terminal sugar phosphate. This Salmonella paratyphi C (strain RKS4594) protein is Probable endonuclease 4.